The sequence spans 106 residues: UPF0145 protein VC_A0951 (106 aa).

It belongs to the UPF0145 family.

The sequence is that of UPF0145 protein VC_A0951 from Vibrio cholerae serotype O1 (strain ATCC 39315 / El Tor Inaba N16961).